A 186-amino-acid chain; its full sequence is Large ribosomal subunit protein uL10 (186 aa).

In terms of assembly, part of the ribosomal stalk of the 50S ribosomal subunit. The N-terminus interacts with L11 and the large rRNA to form the base of the stalk. The C-terminus forms an elongated spine to which L12 dimers bind in a sequential fashion forming a multimeric L10(L12)X complex.

Its function is as follows. Forms part of the ribosomal stalk, playing a central role in the interaction of the ribosome with GTP-bound translation factors. The chain is Large ribosomal subunit protein uL10 from Rhodopseudomonas palustris (strain ATCC BAA-98 / CGA009).